The primary structure comprises 139 residues: Acidic phospholipase A2 S1E6-c (139 aa).

The first 16 residues, 1 to 16, serve as a signal peptide directing secretion; sequence MRTLWILAVLLVGVEG. Intrachain disulfides connect cysteine 42–cysteine 132, cysteine 44–cysteine 60, cysteine 59–cysteine 111, cysteine 65–cysteine 139, cysteine 66–cysteine 104, cysteine 73–cysteine 97, and cysteine 91–cysteine 102. Ca(2+) contacts are provided by tyrosine 43, glycine 45, and glycine 47. Residue histidine 63 is part of the active site. A Ca(2+)-binding site is contributed by aspartate 64. The active site involves aspartate 105.

It belongs to the phospholipase A2 family. Group II subfamily. D49 sub-subfamily. In terms of assembly, homodimer. Requires Ca(2+) as cofactor. As to expression, expressed by the venom gland.

It localises to the secreted. It catalyses the reaction a 1,2-diacyl-sn-glycero-3-phosphocholine + H2O = a 1-acyl-sn-glycero-3-phosphocholine + a fatty acid + H(+). Its function is as follows. Snake venom phospholipase A2 (PLA2) that inhibits ADP-induced platelet aggregation. PLA2 catalyzes the calcium-dependent hydrolysis of the 2-acyl groups in 3-sn-phosphoglycerides. This is Acidic phospholipase A2 S1E6-c from Calloselasma rhodostoma (Malayan pit viper).